A 110-amino-acid chain; its full sequence is Large ribosomal subunit protein uL22 (110 aa).

Belongs to the universal ribosomal protein uL22 family. In terms of assembly, part of the 50S ribosomal subunit.

In terms of biological role, this protein binds specifically to 23S rRNA; its binding is stimulated by other ribosomal proteins, e.g. L4, L17, and L20. It is important during the early stages of 50S assembly. It makes multiple contacts with different domains of the 23S rRNA in the assembled 50S subunit and ribosome. The globular domain of the protein is located near the polypeptide exit tunnel on the outside of the subunit, while an extended beta-hairpin is found that lines the wall of the exit tunnel in the center of the 70S ribosome. This chain is Large ribosomal subunit protein uL22, found in Pasteurella multocida (strain Pm70).